The primary structure comprises 86 residues: Cell division topological specificity factor (86 aa).

Belongs to the MinE family.

In terms of biological role, prevents the cell division inhibition by proteins MinC and MinD at internal division sites while permitting inhibition at polar sites. This ensures cell division at the proper site by restricting the formation of a division septum at the midpoint of the long axis of the cell. The protein is Cell division topological specificity factor of Photobacterium profundum (strain SS9).